Here is a 155-residue protein sequence, read N- to C-terminus: SsrA-binding protein (155 aa).

This sequence belongs to the SmpB family.

It is found in the cytoplasm. In terms of biological role, required for rescue of stalled ribosomes mediated by trans-translation. Binds to transfer-messenger RNA (tmRNA), required for stable association of tmRNA with ribosomes. tmRNA and SmpB together mimic tRNA shape, replacing the anticodon stem-loop with SmpB. tmRNA is encoded by the ssrA gene; the 2 termini fold to resemble tRNA(Ala) and it encodes a 'tag peptide', a short internal open reading frame. During trans-translation Ala-aminoacylated tmRNA acts like a tRNA, entering the A-site of stalled ribosomes, displacing the stalled mRNA. The ribosome then switches to translate the ORF on the tmRNA; the nascent peptide is terminated with the 'tag peptide' encoded by the tmRNA and targeted for degradation. The ribosome is freed to recommence translation, which seems to be the essential function of trans-translation. The chain is SsrA-binding protein from Streptococcus uberis (strain ATCC BAA-854 / 0140J).